A 188-amino-acid chain; its full sequence is Elongation factor P-like protein (188 aa).

This sequence belongs to the elongation factor P family.

In Vibrio parahaemolyticus serotype O3:K6 (strain RIMD 2210633), this protein is Elongation factor P-like protein.